The following is a 75-amino-acid chain: Pi-hexatoxin-Hi1a (75 aa).

Cystine bridges form between cysteine 3/cysteine 18, cysteine 10/cysteine 23, cysteine 17/cysteine 33, cysteine 40/cysteine 55, cysteine 47/cysteine 60, and cysteine 54/cysteine 71. Domain repeat units follow at residues 3-33 (CIRKWLSCVDRKNDCCEGLECYKRRHSFEVC) and 40-71 (CLVKWKQCDGRERDCCAGLECWKRSGNKSSVC). The interval 3–71 (CIRKWLSCVD…KRSGNKSSVC (69 aa)) is 2 X approximate repeats with cysteine pattern C-C-CC-C-C.

It belongs to the psalmotoxin-1 family. Double-knot toxin subfamily. As to expression, expressed by the venom gland.

It localises to the secreted. This toxin potently and selectively inhibits ASIC1a (IC(50)=0.4 nM on rASIC1a and IC(50)=0.52 nM on hASIC1a), an isoform of the gene ASIC1. It incompletely inhibits ASIC1a activation in a pH-independent and slowly reversible manner (Tau(off)=14.2 minutes for rASIC1a and 31.8 minutes for hASIC1a). This toxin acts by binding to and stabilizing the closed state of the channel, thereby impeding the transition into a conducting state. This toxin may bind to the acidic pocket of ASIC1a, since mutation of a key residue of this pocket (Arg-350) abolishes the ability of the toxin to inhibit ASIC1a. In addition, it shows antiparasitic activities, since it moderately inhibits the larval development of the major pathogenic nematode of ruminants (H.contortus, IC(50)=22.9 uM). In vivo, this toxin protects the brain from neuronal injury when administered up to 8 hours after stroke onset. In Hadronyche infensa (Fraser island funnel-web spider), this protein is Pi-hexatoxin-Hi1a.